Here is a 447-residue protein sequence, read N- to C-terminus: Probable glycosyltransferase 7 (447 aa).

Positions 1–31 (MRATTGARHLHPPWRRGLRHHRQSTMPPRAS) are disordered. Residues 1–37 (MRATTGARHLHPPWRRGLRHHRQSTMPPRASRGRLAD) lie on the Cytoplasmic side of the membrane. The span at 8-23 (RHLHPPWRRGLRHHRQ) shows a compositional bias: basic residues. The chain crosses the membrane as a helical; Signal-anchor for type II membrane protein span at residues 38–60 (AALFTAGAVLGSVLLLTLASPFS). Residues 61–447 (SSSSPSSGVG…LPFDHPTQTA (387 aa)) lie on the Lumenal side of the membrane. N-linked (GlcNAc...) asparagine glycans are attached at residues Asn-285 and Asn-329.

It belongs to the glycosyltransferase 34 family.

The protein resides in the golgi apparatus membrane. Its function is as follows. Probable glycosyltransferase that may be involved in the biosynthesis of xyloglucan. This is Probable glycosyltransferase 7 from Oryza sativa subsp. indica (Rice).